We begin with the raw amino-acid sequence, 433 residues long: Ribosomal protein uS12 methylthiotransferase RimO (433 aa).

Positions asparagine 9 to arginine 124 constitute an MTTase N-terminal domain. 6 residues coordinate [4Fe-4S] cluster: cysteine 18, cysteine 53, cysteine 87, cysteine 148, cysteine 152, and cysteine 155. A Radical SAM core domain is found at threonine 134–aspartate 364. The TRAM domain occupies glutamine 367–alanine 433.

This sequence belongs to the methylthiotransferase family. RimO subfamily. The cofactor is [4Fe-4S] cluster.

Its subcellular location is the cytoplasm. The enzyme catalyses L-aspartate(89)-[ribosomal protein uS12]-hydrogen + (sulfur carrier)-SH + AH2 + 2 S-adenosyl-L-methionine = 3-methylsulfanyl-L-aspartate(89)-[ribosomal protein uS12]-hydrogen + (sulfur carrier)-H + 5'-deoxyadenosine + L-methionine + A + S-adenosyl-L-homocysteine + 2 H(+). Functionally, catalyzes the methylthiolation of an aspartic acid residue of ribosomal protein uS12. The chain is Ribosomal protein uS12 methylthiotransferase RimO from Flavobacterium psychrophilum (strain ATCC 49511 / DSM 21280 / CIP 103535 / JIP02/86).